A 779-amino-acid polypeptide reads, in one-letter code: Membrane metallo-endopeptidase-like 1 (779 aa).

The Cytoplasmic portion of the chain corresponds to 1 to 27 (MGKSEGPVGMVESAGRAGQKRPGFLEG). Residues 28–48 (GLLLLLLLVTAALVALGVLYA) traverse the membrane as a helical; Signal-anchor for type II membrane protein segment. Residues 49-779 (DRRGKQLPRL…MHPKERCRVW (731 aa)) lie on the Lumenal side of the membrane. One can recognise a Peptidase M13 domain in the interval 88-779 (VCTTPGCVIA…MHPKERCRVW (692 aa)). Disulfide bonds link Cys-89–Cys-94, Cys-112–Cys-764, Cys-120–Cys-724, Cys-175–Cys-439, and Cys-650–Cys-776. Arg-135 is a binding site for a peptide. 4 N-linked (GlcNAc...) asparagine glycosylation sites follow: Asn-177, Asn-207, Asn-350, and Asn-530. Residues 515-560 (LEEMNRRLDEEYSNLNFSEDLYFENSLQNLKVGAQRSLRKLREKVD) adopt a coiled-coil conformation. His-613 serves as a coordination point for Zn(2+). The active site involves Glu-614. His-617 provides a ligand contact to Zn(2+). Asn-657 is a glycosylation site (N-linked (GlcNAc...) asparagine). Glu-676 provides a ligand contact to Zn(2+). Asp-680 serves as the catalytic Proton donor.

This sequence belongs to the peptidase M13 family. The cofactor is Zn(2+). In terms of processing, N-glycosylated. In terms of tissue distribution, predominantly expressed in testis. Weakly expressed in brain, kidney and heart.

The protein localises to the membrane. It is found in the secreted. It catalyses the reaction Preferential cleavage of polypeptides between hydrophobic residues, particularly with Phe or Tyr at P1'.. Inhibited by thiorphan and phosphoramidon. Its function is as follows. Metalloprotease involved in sperm function, possibly by modulating the processes of fertilization and early embryonic development. Degrades a broad variety of small peptides with a preference for peptides shorter than 3 kDa containing neutral bulky aliphatic or aromatic amino acid residues. Shares the same substrate specificity with MME and cleaves peptides at the same amide bond. This chain is Membrane metallo-endopeptidase-like 1 (MMEL1), found in Homo sapiens (Human).